The following is a 334-amino-acid chain: Glycerol-3-phosphate dehydrogenase [NAD(P)+] (334 aa).

The NADPH site is built by Ser14, Tyr15, Arg35, and Lys109. Sn-glycerol 3-phosphate-binding residues include Lys109, Gly138, and Thr140. Ala142 serves as a coordination point for NADPH. Residues Lys194, Asp247, Ser257, Arg258, and Asn259 each coordinate sn-glycerol 3-phosphate. The active-site Proton acceptor is the Lys194. Residue Arg258 coordinates NADPH. Residues Val282 and Glu284 each coordinate NADPH.

It belongs to the NAD-dependent glycerol-3-phosphate dehydrogenase family.

It localises to the cytoplasm. It catalyses the reaction sn-glycerol 3-phosphate + NAD(+) = dihydroxyacetone phosphate + NADH + H(+). The catalysed reaction is sn-glycerol 3-phosphate + NADP(+) = dihydroxyacetone phosphate + NADPH + H(+). The protein operates within membrane lipid metabolism; glycerophospholipid metabolism. In terms of biological role, catalyzes the reduction of the glycolytic intermediate dihydroxyacetone phosphate (DHAP) to sn-glycerol 3-phosphate (G3P), the key precursor for phospholipid synthesis. This chain is Glycerol-3-phosphate dehydrogenase [NAD(P)+], found in Colwellia psychrerythraea (strain 34H / ATCC BAA-681) (Vibrio psychroerythus).